The following is a 284-amino-acid chain: Tropomyosin alpha-1 chain (284 aa).

At Met-1 the chain carries N-acetylmethionine. Positions 1–38 (MDAIKKKMQMLKLDKENALDRAEQAEADKKAAEDRSKQ) are disordered. Residues 1 to 284 (MDAIKKKMQM…DHALNDMTSI (284 aa)) are a coiled coil. Positions 12–38 (KLDKENALDRAEQAEADKKAAEDRSKQ) are enriched in basic and acidic residues. At Ser-45 the chain carries Phosphoserine. The tract at residues 116-136 (AEKAADESERGMKVIESRAQK) is disordered. Ser-174, Ser-186, Ser-206, and Ser-252 each carry phosphoserine. Tyr-261 bears the Phosphotyrosine mark. Residues Ser-271 and Ser-283 each carry the phosphoserine modification.

This sequence belongs to the tropomyosin family. Homodimer. Heterodimer of an alpha (TPM1, TPM3 or TPM4) and a beta (TPM2) chain. Interacts with HRG (via the HRR domain); the interaction contributes to the antiangiogenic properties of the histidine/proline-rich region (HRR) of HRG. Interacts (via N-terminus) with LMOD2 (via N-terminus) and TMOD1 (via N-terminus). In terms of processing, phosphorylated at Ser-283 by DAPK1 in response to oxidative stress and this phosphorylation enhances stress fiber formation in endothelial cells.

Its subcellular location is the cytoplasm. The protein localises to the cytoskeleton. In terms of biological role, binds to actin filaments in muscle and non-muscle cells. Plays a central role, in association with the troponin complex, in the calcium dependent regulation of vertebrate striated muscle contraction. Smooth muscle contraction is regulated by interaction with caldesmon. In non-muscle cells is implicated in stabilizing cytoskeleton actin filaments. The polypeptide is Tropomyosin alpha-1 chain (Tpm1) (Mus musculus (Mouse)).